The sequence spans 361 residues: Trehalose 6-phosphate phosphatase RA3 (361 aa).

It belongs to the trehalose phosphatase family. The cofactor is a divalent metal cation. As to expression, expressed in axillary inflorescence meristems.

The enzyme catalyses alpha,alpha-trehalose 6-phosphate + H2O = alpha,alpha-trehalose + phosphate. Its pathway is glycan biosynthesis; trehalose biosynthesis. In terms of biological role, removes the phosphate from trehalose 6-phosphate to produce free trehalose. Is specific for trehalose 6-phosphate. Does not possess activity toward glucose, sucrose or fructose 6-phosphates. Regulates inflorescence branching. Required to establish the correct identity and determinacy of axillary meristems in both male and female inflorescences. May act through a sugar signal that moves into axillary meristems. Acts upstream of RA1. May have a transcriptional regulatory function. The chain is Trehalose 6-phosphate phosphatase RA3 from Zea mays (Maize).